A 269-amino-acid polypeptide reads, in one-letter code: Putative hydro-lyase Atu3911 (269 aa).

It belongs to the D-glutamate cyclase family.

The chain is Putative hydro-lyase Atu3911 from Agrobacterium fabrum (strain C58 / ATCC 33970) (Agrobacterium tumefaciens (strain C58)).